A 464-amino-acid polypeptide reads, in one-letter code: Glycine receptor subunit alpha-3 (464 aa).

The first 33 residues, 1-33 (MAHVRHFRTLVSGFYFWEAALLLSLVATKETDS), serve as a signal peptide directing secretion. Residues 34–255 (ARSRSAPMSP…RFHLERQMGY (222 aa)) lie on the Extracellular side of the membrane. An N-linked (GlcNAc...) asparagine glycan is attached at Asn-71. Cys-171 and Cys-185 are disulfide-bonded. Glu-225 and Asp-227 together coordinate Zn(2+). Residues Cys-231 and Cys-242 are joined by a disulfide bond. 235-240 (YNTGKF) contributes to the strychnine binding site. His-248 provides a ligand contact to Zn(2+). A helical transmembrane segment spans residues 256 to 277 (YLIQMYIPSLLIVILSWVSFWI). At 278 to 282 (NMDAA) the chain is on the cytoplasmic side. The chain crosses the membrane as a helical span at residues 283–303 (PARVALGITTVLTMTTQSSGS). Over 304-314 (RASLPKVSYVK) the chain is Extracellular. Residues 315-335 (AIDIWMAVCLLFVFSALLEYA) traverse the membrane as a helical segment. At 336 to 430 (AVNFVSRQHK…FIDRAKKIDT (95 aa)) the chain is on the cytoplasmic side. Ser-370 and Ser-379 each carry phosphoserine. A helical transmembrane segment spans residues 431–451 (ISRACFPLAFLIFNIFYWVIY). Residues 452 to 464 (KILRHEDIHQQQD) are Extracellular-facing.

Belongs to the ligand-gated ion channel (TC 1.A.9) family. Glycine receptor (TC 1.A.9.3) subfamily. GLRA3 sub-subfamily. In terms of assembly, homopentamer (in vitro). Heteropentamer composed of GLRA3 and GLRB. Both homopentamers and heteropentamers form functional ion channels, but their characteristics are subtly different. Post-translationally, phosphorylated by PKA; this causes down-regulation of channel activity. Widely distributed throughout the central nervous system.

Its subcellular location is the postsynaptic cell membrane. It is found in the perikaryon. It localises to the cell projection. The protein localises to the dendrite. The protein resides in the synapse. Its subcellular location is the cell membrane. It catalyses the reaction chloride(in) = chloride(out). Its function is as follows. Glycine receptors are ligand-gated chloride channels. Channel opening is triggered by extracellular glycine. Channel characteristics depend on the subunit composition; heteropentameric channels display faster channel closure. Plays an important role in the down-regulation of neuronal excitability. Contributes to the generation of inhibitory postsynaptic currents. Contributes to increased pain perception in response to increased prostaglandin E2 levels. Plays a role in cellular responses to ethanol. In Homo sapiens (Human), this protein is Glycine receptor subunit alpha-3 (GLRA3).